The following is a 361-amino-acid chain: Protein phosphatase 1 regulatory subunit 7 (361 aa).

A disordered region spans residues 1–64 (MAAERGAGQQ…RGAEDPEEEH (64 aa)). At alanine 2 the chain carries N-acetylalanine. Residues serine 12, serine 24, serine 27, serine 45, and serine 48 each carry the phosphoserine modification. Residues 17 to 34 (EVDRRVESEESGDEEGKK) show a composition bias toward basic and acidic residues. The span at 48 to 58 (SLKDGVDRGAE) shows a compositional bias: basic and acidic residues. LRR repeat units follow at residues 78-99 (DAED…EVLK), 100-121 (KVKS…EELQ), 122-143 (SLRE…EALT), 144-165 (ELEV…DKLT), 166-187 (QLKK…SNLH), 188-209 (QLQM…DTLT), 210-231 (NLES…DALT), 232-253 (NLTV…QSLV), 254-275 (NLRE…ENNN), 276-297 (KLTM…SHLT), and 298-319 (ELQE…DELK). Serine 323 is subject to Phosphoserine. The region spanning 332–361 (NPLQKDPQYRRKVMLALPSVRQIDATYVRF) is the LRRCT domain.

Belongs to the SDS22 family. Interacts with PPP1CA, PPP1CB and PPP1CC/PPP1G. In terms of tissue distribution, widely expressed with high level in testis. Expression increases during puberty. Expressed in spermatids and probably also in spermatozoa.

It localises to the nucleus. Regulatory subunit of protein phosphatase 1. The chain is Protein phosphatase 1 regulatory subunit 7 (Ppp1r7) from Mus musculus (Mouse).